The following is a 66-amino-acid chain: Hirudin-PA (66 aa).

Residues 1 to 3 (ITY) are interaction with thrombin active site. 3 cysteine pairs are disulfide-bonded: cysteine 6/cysteine 14, cysteine 16/cysteine 28, and cysteine 22/cysteine 39. The tract at residues 39-66 (CVTGEGTPKPQSHNQGDFEPIPEDAYDE) is disordered. Threonine 45 carries an O-linked (GalNAc...) threonine glycan. An interaction with fibrinogen-binding exosite of thrombin region spans residues 55–66 (DFEPIPEDAYDE). Position 64 is a sulfotyrosine (tyrosine 64).

It belongs to the protease inhibitor I14 (hirudin) family.

It localises to the secreted. Functionally, hirudin is a potent thrombin-specific protease inhibitor. It forms a stable non-covalent complex with alpha-thrombin, thereby abolishing its ability to cleave fibrinogen. In Hirudo medicinalis (Medicinal leech), this protein is Hirudin-PA.